A 340-amino-acid polypeptide reads, in one-letter code: Ketol-acid reductoisomerase (NADP(+)) (340 aa).

A KARI N-terminal Rossmann domain is found at Met-1–Thr-183. NADP(+)-binding positions include Phe-26–Gln-29, Lys-49, Ser-54, and Asp-84–Gln-87. His-109 is a catalytic residue. Gly-135 is a binding site for NADP(+). Residues Thr-184–Ile-329 enclose the KARI C-terminal knotted domain. Residues Asp-192, Glu-196, Glu-228, and Glu-232 each contribute to the Mg(2+) site. Residue Ser-253 participates in substrate binding.

This sequence belongs to the ketol-acid reductoisomerase family. It depends on Mg(2+) as a cofactor.

The enzyme catalyses (2R)-2,3-dihydroxy-3-methylbutanoate + NADP(+) = (2S)-2-acetolactate + NADPH + H(+). It carries out the reaction (2R,3R)-2,3-dihydroxy-3-methylpentanoate + NADP(+) = (S)-2-ethyl-2-hydroxy-3-oxobutanoate + NADPH + H(+). The protein operates within amino-acid biosynthesis; L-isoleucine biosynthesis; L-isoleucine from 2-oxobutanoate: step 2/4. Its pathway is amino-acid biosynthesis; L-valine biosynthesis; L-valine from pyruvate: step 2/4. Functionally, involved in the biosynthesis of branched-chain amino acids (BCAA). Catalyzes an alkyl-migration followed by a ketol-acid reduction of (S)-2-acetolactate (S2AL) to yield (R)-2,3-dihydroxy-isovalerate. In the isomerase reaction, S2AL is rearranged via a Mg-dependent methyl migration to produce 3-hydroxy-3-methyl-2-ketobutyrate (HMKB). In the reductase reaction, this 2-ketoacid undergoes a metal-dependent reduction by NADPH to yield (R)-2,3-dihydroxy-isovalerate. In Campylobacter hominis (strain ATCC BAA-381 / DSM 21671 / CCUG 45161 / LMG 19568 / NCTC 13146 / CH001A), this protein is Ketol-acid reductoisomerase (NADP(+)).